The chain runs to 85 residues: MKKSFLFTFTVLTIFTILVIGVAPEKLTTCSRFLSQKSGKCVKEDCDRMCKQKWPGKYTVGHCYGQFKDAKRCLCSVCGPDRQPP.

The N-terminal stretch at 1–24 is a signal peptide; it reads MKKSFLFTFTVLTIFTILVIGVAP. 4 cysteine pairs are disulfide-bonded: Cys30–Cys78, Cys41–Cys63, Cys46–Cys73, and Cys50–Cys75.

It belongs to the DEFL family.

The protein resides in the secreted. This is Putative defensin-like protein 142 (LCR34) from Arabidopsis thaliana (Mouse-ear cress).